The chain runs to 414 residues: MATQRASGLLQRLAQGSLVKQILVGLVLGILLAWVSKPAAEAVGLLGTLFVGALKAVAPILVLMLVMASIANHQHGQKTNIRPILFLYLLGTFSAALAAVVFSFAFPSTLHLSSSAQDIVPPSGIVEVLRGLLISMVSNPIDALLNANYIGILVWAVGLGFALRHGNETTKNLVNDMSNAVTFMVKLVIRFAPVGIFGLVSSTLATTGFSTLWGYAHLLVVLIGCMLLVALVVNPLLVFWKIRRNPYPLVFACLRESGVYAFFTRSSAANIPVNMALCEKLNLDRDTYSVSIPLGATINMAGAAITITVLTLAAVHTLGVPVDLPTALLLSVVASLCACGASGVAGGSLLLIPLACNMFGIPNDIAMQVVAVGFIIGVLQDSCETALNSSTDVLFTAAACQAEDERLANNALRS.

8 helical membrane passes run 16-36, 46-66, 84-104, 143-163, 180-200, 219-239, 300-320, and 332-352; these read GSLV…AWVS, LGTL…LMLV, ILFL…VFSF, ALLN…GFAL, AVTF…FGLV, LVVL…LLVF, MAGA…TLGV, and VVAS…LLLI.

It belongs to the dicarboxylate/amino acid:cation symporter (DAACS) (TC 2.A.23) family.

The protein resides in the cell inner membrane. It carries out the reaction L-serine(in) + Na(+)(in) = L-serine(out) + Na(+)(out). The catalysed reaction is L-threonine(in) + Na(+)(in) = L-threonine(out) + Na(+)(out). Involved in the import of serine and threonine into the cell, with the concomitant import of sodium (symport system). In Salmonella arizonae (strain ATCC BAA-731 / CDC346-86 / RSK2980), this protein is Serine/threonine transporter SstT.